Here is a 520-residue protein sequence, read N- to C-terminus: Chaperone Ric-8B (520 aa).

A Phosphoserine modification is found at S468. T473 is subject to Phosphothreonine.

This sequence belongs to the synembryn family. In terms of assembly, interacts with GDP-bound G(s) G-alpha proteins GNAL and GNAS. Does not interact with G-alpha proteins when they are in complex with subunits beta and gamma.

The protein localises to the cytoplasm. It localises to the cell cortex. Its function is as follows. Chaperone that specifically binds and folds nascent G(s) G-alpha proteins (GNAS and GNAL) prior to G protein heterotrimer formation, promoting their association with the plasma membrane. Also acts as a guanine nucleotide exchange factor (GEF) for G(s) proteins by stimulating exchange of bound GDP for free GTP. Acts as an important component for odorant signal transduction by mediating GNAL (G(olf)-alpha) folding, thereby promoting-dependent cAMP accumulation in olfactory sensory neurons. The sequence is that of Chaperone Ric-8B (Ric8b) from Rattus norvegicus (Rat).